The following is a 285-amino-acid chain: Hypersensitive-induced response protein 3 (285 aa).

Gly2 carries the N-myristoyl glycine lipid modification. Coiled coils occupy residues 113-139 and 165-185; these read NLDDVFEQKNEIAKSVEEELDKAMTAY and NAAARMRVAASEKAEAEKIIQ.

In terms of assembly, self-interacts and forms heteromers. Interacts with NB-LRR class of R proteins before R proteins (e.g. RPS2 or RPM1) are activated by the effectors.

Its subcellular location is the cell membrane. This is Hypersensitive-induced response protein 3 (HIR3) from Arabidopsis thaliana (Mouse-ear cress).